We begin with the raw amino-acid sequence, 337 residues long: UDP-N-acetylenolpyruvoylglucosamine reductase (337 aa).

Residues 16–187 (ALPGRAARYQ…TSVIFRLAKA (172 aa)) enclose the FAD-binding PCMH-type domain. The active site involves R160. S237 serves as the catalytic Proton donor. The active site involves E333.

FAD serves as cofactor.

The protein localises to the cytoplasm. It catalyses the reaction UDP-N-acetyl-alpha-D-muramate + NADP(+) = UDP-N-acetyl-3-O-(1-carboxyvinyl)-alpha-D-glucosamine + NADPH + H(+). Its pathway is cell wall biogenesis; peptidoglycan biosynthesis. Functionally, cell wall formation. This Dechloromonas aromatica (strain RCB) protein is UDP-N-acetylenolpyruvoylglucosamine reductase.